The chain runs to 277 residues: RsbT co-antagonist protein RsbRB (277 aa).

An STAS domain is found at Ser-165 to His-276. Thr-186 carries the phosphothreonine modification.

As to quaternary structure, interacts with RsbRA and RsbS in the stressosome. The stressosome probably also contains RsbRC and RsbRD. Post-translationally, phosphorylated by RsbT.

Its function is as follows. One of 4 functionally non-identical RsbR paralogs, it functions in the environmental signaling branch of the general stress response. In terms of biological role, negative regulator of sigma-B activity. Non-phosphorylated RsbS binds to RsbT, preventing its association with RsbU. Requires any one of RsbRA, RsbRB, RsbRC or RsbRD to sequester RsbT. When RsbS and the RsbR paralog(s) are phosphorylated, they release RsbT, which can then bind and activate RsbU. In Bacillus subtilis (strain 168), this protein is RsbT co-antagonist protein RsbRB (rsbRB).